A 225-amino-acid polypeptide reads, in one-letter code: UPF0758 protein Shewmr7_0359 (225 aa).

Positions V102–I224 constitute an MPN domain. Residues H173, H175, and D186 each coordinate Zn(2+). The short motif at H173–D186 is the JAMM motif element.

Belongs to the UPF0758 family.

The polypeptide is UPF0758 protein Shewmr7_0359 (Shewanella sp. (strain MR-7)).